A 409-amino-acid chain; its full sequence is uncharacterized protein (409 aa).

Residues 1-209 (MRVFVARQPI…GHDLSTHFYS (209 aa)) form the EAL domain. Residues 203 to 392 (LSTHFYSYYE…GNQLDKEEAY (190 aa)) enclose the HDOD domain.

This is an uncharacterized protein from Bacillus subtilis (strain 168).